The sequence spans 320 residues: o-succinylbenzoate synthase (320 aa).

The active-site Proton donor is the K133. Residues D161, E190, and D213 each coordinate Mg(2+). The active-site Proton acceptor is K235.

It belongs to the mandelate racemase/muconate lactonizing enzyme family. MenC type 1 subfamily. A divalent metal cation serves as cofactor.

It catalyses the reaction (1R,6R)-6-hydroxy-2-succinyl-cyclohexa-2,4-diene-1-carboxylate = 2-succinylbenzoate + H2O. It functions in the pathway quinol/quinone metabolism; 1,4-dihydroxy-2-naphthoate biosynthesis; 1,4-dihydroxy-2-naphthoate from chorismate: step 4/7. The protein operates within quinol/quinone metabolism; menaquinone biosynthesis. Functionally, converts 2-succinyl-6-hydroxy-2,4-cyclohexadiene-1-carboxylate (SHCHC) to 2-succinylbenzoate (OSB). The protein is o-succinylbenzoate synthase of Escherichia fergusonii (strain ATCC 35469 / DSM 13698 / CCUG 18766 / IAM 14443 / JCM 21226 / LMG 7866 / NBRC 102419 / NCTC 12128 / CDC 0568-73).